We begin with the raw amino-acid sequence, 493 residues long: 3-octaprenyl-4-hydroxybenzoate carboxy-lyase (493 aa).

Asn172 contributes to the Mn(2+) binding site. Residues 175–177 (IYR), 189–191 (RWL), and 194–195 (RG) contribute to the prenylated FMN site. Mn(2+) is bound at residue Glu238. The Proton donor role is filled by Asp287.

The protein belongs to the UbiD family. In terms of assembly, homohexamer. Requires prenylated FMN as cofactor. It depends on Mn(2+) as a cofactor.

The protein resides in the cell membrane. The enzyme catalyses a 4-hydroxy-3-(all-trans-polyprenyl)benzoate + H(+) = a 2-(all-trans-polyprenyl)phenol + CO2. Its pathway is cofactor biosynthesis; ubiquinone biosynthesis. Functionally, catalyzes the decarboxylation of 3-octaprenyl-4-hydroxy benzoate to 2-octaprenylphenol, an intermediate step in ubiquinone biosynthesis. The protein is 3-octaprenyl-4-hydroxybenzoate carboxy-lyase of Shewanella baltica (strain OS195).